The following is a 333-amino-acid chain: Ferrochelatase (333 aa).

Fe cation is bound by residues His-202 and Glu-284.

The protein belongs to the ferrochelatase family.

It localises to the cytoplasm. The enzyme catalyses heme b + 2 H(+) = protoporphyrin IX + Fe(2+). The protein operates within porphyrin-containing compound metabolism; protoheme biosynthesis; protoheme from protoporphyrin-IX: step 1/1. Its function is as follows. Catalyzes the ferrous insertion into protoporphyrin IX. In Francisella tularensis subsp. mediasiatica (strain FSC147), this protein is Ferrochelatase.